We begin with the raw amino-acid sequence, 524 residues long: 2-isopropylmalate synthase (524 aa).

Residues 15–277 enclose the Pyruvate carboxyltransferase domain; that stretch reads VVIFDTTMRD…ETKIDTTHIT (263 aa). 4 residues coordinate Mn(2+): D24, H212, H214, and N248. The regulatory domain stretch occupies residues 401–524; sequence RVQRLRVVAG…RPEAAIASGF (124 aa).

It belongs to the alpha-IPM synthase/homocitrate synthase family. LeuA type 1 subfamily. In terms of assembly, homodimer. It depends on Mn(2+) as a cofactor.

The protein localises to the cytoplasm. The catalysed reaction is 3-methyl-2-oxobutanoate + acetyl-CoA + H2O = (2S)-2-isopropylmalate + CoA + H(+). Its pathway is amino-acid biosynthesis; L-leucine biosynthesis; L-leucine from 3-methyl-2-oxobutanoate: step 1/4. In terms of biological role, catalyzes the condensation of the acetyl group of acetyl-CoA with 3-methyl-2-oxobutanoate (2-ketoisovalerate) to form 3-carboxy-3-hydroxy-4-methylpentanoate (2-isopropylmalate). The polypeptide is 2-isopropylmalate synthase (Caulobacter sp. (strain K31)).